A 91-amino-acid polypeptide reads, in one-letter code: Large ribosomal subunit protein eL31 (91 aa).

It belongs to the eukaryotic ribosomal protein eL31 family.

This is Large ribosomal subunit protein eL31 from Pyrobaculum neutrophilum (strain DSM 2338 / JCM 9278 / NBRC 100436 / V24Sta) (Thermoproteus neutrophilus).